We begin with the raw amino-acid sequence, 456 residues long: Bifunctional protein GlmU (456 aa).

The interval methionine 1–arginine 229 is pyrophosphorylase. UDP-N-acetyl-alpha-D-glucosamine is bound by residues leucine 11–glycine 14, lysine 25, glutamine 76, glycine 81–threonine 82, tyrosine 103–aspartate 105, glycine 140, glutamate 154, asparagine 169, and asparagine 227. Aspartate 105 contacts Mg(2+). Asparagine 227 contributes to the Mg(2+) binding site. Positions leucine 230–alanine 250 are linker. The interval glycine 251–lysine 456 is N-acetyltransferase. The UDP-N-acetyl-alpha-D-glucosamine site is built by arginine 333 and lysine 351. Histidine 363 serves as the catalytic Proton acceptor. UDP-N-acetyl-alpha-D-glucosamine contacts are provided by tyrosine 366 and asparagine 377. Residues alanine 380, asparagine 386–tyrosine 387, serine 405, alanine 423, and arginine 440 contribute to the acetyl-CoA site.

In the N-terminal section; belongs to the N-acetylglucosamine-1-phosphate uridyltransferase family. It in the C-terminal section; belongs to the transferase hexapeptide repeat family. As to quaternary structure, homotrimer. Mg(2+) is required as a cofactor.

Its subcellular location is the cytoplasm. The enzyme catalyses alpha-D-glucosamine 1-phosphate + acetyl-CoA = N-acetyl-alpha-D-glucosamine 1-phosphate + CoA + H(+). It carries out the reaction N-acetyl-alpha-D-glucosamine 1-phosphate + UTP + H(+) = UDP-N-acetyl-alpha-D-glucosamine + diphosphate. Its pathway is nucleotide-sugar biosynthesis; UDP-N-acetyl-alpha-D-glucosamine biosynthesis; N-acetyl-alpha-D-glucosamine 1-phosphate from alpha-D-glucosamine 6-phosphate (route II): step 2/2. It functions in the pathway nucleotide-sugar biosynthesis; UDP-N-acetyl-alpha-D-glucosamine biosynthesis; UDP-N-acetyl-alpha-D-glucosamine from N-acetyl-alpha-D-glucosamine 1-phosphate: step 1/1. It participates in bacterial outer membrane biogenesis; LPS lipid A biosynthesis. Functionally, catalyzes the last two sequential reactions in the de novo biosynthetic pathway for UDP-N-acetylglucosamine (UDP-GlcNAc). The C-terminal domain catalyzes the transfer of acetyl group from acetyl coenzyme A to glucosamine-1-phosphate (GlcN-1-P) to produce N-acetylglucosamine-1-phosphate (GlcNAc-1-P), which is converted into UDP-GlcNAc by the transfer of uridine 5-monophosphate (from uridine 5-triphosphate), a reaction catalyzed by the N-terminal domain. The protein is Bifunctional protein GlmU of Escherichia coli (strain 55989 / EAEC).